A 380-amino-acid chain; its full sequence is L-lactate dehydrogenase (380 aa).

Residues 1 to 380 (MIISSASDYR…DASILVKAVA (380 aa)) form the FMN hydroxy acid dehydrogenase domain. Substrate is bound at residue Y24. S106 and Q127 together coordinate FMN. Y129 provides a ligand contact to substrate. T155 is a binding site for FMN. R164 is a substrate binding site. An FMN-binding site is contributed by K251. The active-site Proton acceptor is H275. R278 provides a ligand contact to substrate. 306–330 (DSGIRSGLDVVRMLALGAKGVLLGR) contacts FMN.

The protein belongs to the FMN-dependent alpha-hydroxy acid dehydrogenase family. In terms of assembly, homotetramer. FMN serves as cofactor.

Its subcellular location is the cell inner membrane. The enzyme catalyses (S)-lactate + A = pyruvate + AH2. In terms of biological role, catalyzes the conversion of L-lactate to pyruvate. Is coupled to the respiratory chain. The polypeptide is L-lactate dehydrogenase (Pseudomonas syringae pv. syringae (strain B728a)).